Here is an 859-residue protein sequence, read N- to C-terminus: Low-density lipoprotein receptor-related protein 12 (859 aa).

The N-terminal stretch at 1–32 (MARRWSTKESPRWRSALLLLFLAGVYGNGALA) is a signal peptide. The Extracellular portion of the chain corresponds to 33-492 (EHSENVHISG…ENCPVIVPTR (460 aa)). 2 disulfide bridges follow: cysteine 47–cysteine 76 and cysteine 103–cysteine 122. Positions 47–159 (CGETPEQIRA…KGFRLAYFSG (113 aa)) constitute a CUB 1 domain. Asparagine 75 carries N-linked (GlcNAc...) asparagine glycosylation. Residue asparagine 146 is glycosylated (N-linked (GlcNAc...) asparagine). 2 LDL-receptor class A domains span residues 165–201 (NCAC…EICA) and 214–255 (PCAY…IDCD). 7 disulfides stabilise this stretch: cysteine 166–cysteine 178, cysteine 173–cysteine 191, cysteine 185–cysteine 200, cysteine 215–cysteine 232, cysteine 222–cysteine 245, cysteine 239–cysteine 254, and cysteine 259–cysteine 285. Residues 259-372 (CGQWLKYFYG…RGFNATYQVD (114 aa)) enclose the CUB 2 domain. 2 N-linked (GlcNAc...) asparagine glycosylation sites follow: asparagine 284 and asparagine 366. LDL-receptor class A domains follow at residues 374-411 (FCLP…INCT), 412-449 (MCQK…KNCF), and 450-486 (FCQP…ENCP). Intrachain disulfides connect cysteine 375/cysteine 388, cysteine 382/cysteine 401, cysteine 395/cysteine 410, cysteine 413/cysteine 426, cysteine 420/cysteine 439, cysteine 433/cysteine 448, cysteine 451/cysteine 463, cysteine 458/cysteine 476, and cysteine 470/cysteine 485. The N-linked (GlcNAc...) asparagine glycan is linked to asparagine 409. N-linked (GlcNAc...) asparagine glycosylation is present at asparagine 441. The chain crosses the membrane as a helical span at residues 493–513 (VITAAVIGSLICGLLLVIALG). Residues 514-859 (CTCKLYSLRM…TSDDEALLLC (346 aa)) are Cytoplasmic-facing. 4 disordered regions span residues 623–678 (ADGD…LPQK), 693–723 (ASSS…SPAR), 748–770 (SSVS…REDD), and 802–823 (QGQG…SNRD). Polar residues-rich tracts occupy residues 748-757 (SSVSQNQSPL) and 802-814 (QGQG…NATN).

It belongs to the LDLR family. As to quaternary structure, may interact with RACK1, ZFYVE9 and NMRK2.

It is found in the membrane. The protein localises to the coated pit. In terms of biological role, probable receptor, which may be involved in the internalization of lipophilic molecules and/or signal transduction. May act as a tumor suppressor. This chain is Low-density lipoprotein receptor-related protein 12 (LRP12), found in Pongo abelii (Sumatran orangutan).